A 421-amino-acid polypeptide reads, in one-letter code: Carboxypeptidase A4 (421 aa).

Positions 1-16 (MRWILFIGALIGSSIC) are cleaved as a signal peptide. Residues 17–113 (GQEKFFGDQV…EMQHNEGQER (97 aa)) constitute a propeptide, activation peptide. Positions 69, 71, 119, 123, 124, 125, 127, and 163 each coordinate a protein. Positions 122-416 (AYHSLEAIYH…LGLKTIMEHV (295 aa)) constitute a Peptidase M14 domain. 2 residues coordinate Zn(2+): H181 and E184. The a protein site is built by R196, K197, and S248. Residues C250 and C273 are joined by a disulfide bond. A glycan (N-linked (GlcNAc...) asparagine) is linked at N260. Residue D270 coordinates a protein. Residue H308 participates in Zn(2+) binding. E382 functions as the Proton donor/acceptor in the catalytic mechanism.

It belongs to the peptidase M14 family. Monomer. Interacts with LXN. Zn(2+) serves as cofactor. As to expression, fetal expression in the adrenal gland, brain, heart, intestine, kidney, liver and lung. Except for fetal brain that shows no imprinting, expression was found preferentially from the maternal allele.

The protein resides in the secreted. Inhibited by interaction with the metallocarboxypeptidase inhibitor (MCPI) from N.versicolor that binds to the catalytic zinc ion. Also inhibited by interaction with the S.magnifica carboxypeptidase inhibitor SmCI that penetrates the active site groove and inhibits activity by emulating a C-terminal substrate. Additionally inhibited by a carboxypeptidase inhibitor from H.medicinalis (leech) and R.bursa (tick). Functionally, metalloprotease that cleaves hydrophobic C-terminal residues with a preference for -Phe, -Leu, -Ile, -Met, -Tyr and -Val. May function in peptide hormone and/or neuropeptide catabolism. This chain is Carboxypeptidase A4 (CPA4), found in Homo sapiens (Human).